A 78-amino-acid chain; its full sequence is Large ribosomal subunit protein bL28B (78 aa).

It belongs to the bacterial ribosomal protein bL28 family.

This is Large ribosomal subunit protein bL28B (rpmB2) from Streptomyces coelicolor (strain ATCC BAA-471 / A3(2) / M145).